The following is a 152-amino-acid chain: Large ribosomal subunit protein uL15 (152 aa).

It belongs to the universal ribosomal protein uL15 family. In terms of assembly, part of the 50S ribosomal subunit.

Binds to the 23S rRNA. This Staphylothermus marinus (strain ATCC 43588 / DSM 3639 / JCM 9404 / F1) protein is Large ribosomal subunit protein uL15.